The primary structure comprises 395 residues: Elongation factor Tu (395 aa).

One can recognise a tr-type G domain in the interval Lys-10–Val-205. Residues Gly-19–Thr-26 are G1. Residue Gly-19–Thr-26 participates in GTP binding. Thr-26 provides a ligand contact to Mg(2+). Positions Gly-60–Asn-64 are G2. Residues Asp-81–Gly-84 form a G3 region. GTP is bound by residues Asp-81–His-85 and Asn-136–Asp-139. The tract at residues Asn-136–Asp-139 is G4. The G5 stretch occupies residues Ser-173–Phe-175.

It belongs to the TRAFAC class translation factor GTPase superfamily. Classic translation factor GTPase family. EF-Tu/EF-1A subfamily. Monomer.

The protein resides in the cytoplasm. The enzyme catalyses GTP + H2O = GDP + phosphate + H(+). In terms of biological role, GTP hydrolase that promotes the GTP-dependent binding of aminoacyl-tRNA to the A-site of ribosomes during protein biosynthesis. The protein is Elongation factor Tu of Treponema pallidum (strain Nichols).